The chain runs to 585 residues: Cytochrome P450 monooxygenase AOL_s00215g278 (585 aa).

Cys518 provides a ligand contact to heme.

This sequence belongs to the cytochrome P450 family. Heme serves as cofactor.

It participates in secondary metabolite biosynthesis; terpenoid biosynthesis. In terms of biological role, cytochrome P450 monooxygenase; part of the gene cluster that mediates the biosynthesis of sesquiterpenyl epoxy-cyclohexenoids (SECs) such as anthrobotrisins and arthrosporols, metabolites that possess a novel hybrid carbon skeleton consisting of a polyketide-derived epoxycyclohexenol combined with a terpenoid-derived monocyclic sesquiterpenol substructure (PKS-PTS hybrid). The SEC pathway plays an important role for fungal soil colonization via decreasing fungal nematode-capturing ability. Within the pathway, the cytochrome P450 monooxygenase AOL_s00215g278 plays a role in the oxygenation of the phenol moiety, most likely in the epoxy formation. The pathway begins with the biosynthesis of 6-methylsalicylic acid (6-MSA), the first precursor of the polyketide-derived epoxycyclohexenol in arthrosporols, by the polyketide synthase (PKS) AOL_s00215g283 via condensation of 1 acetate and 3 malonate units. The 6-methylsalicylic acid decarboxylase AOL_s00215g281 then catalyzes the decarboxylation of 6-methylsalicylic acid to yield m-cresol. The cytochrome P450 monooxygenase AOL_s00215g282 further oxidizes m-cresol to yield toluquinol. With the assistance of the oxidoreductase AOL_s00215g277, the polyprenyl transferase AOL_s00215g276 catalyzes the farnesylation of toluquinol to produce farnesyl hydroquinone, the hybrid precursor for biosynthesis of SECs. Farnesyl hydroquinone undergoes epoxidation and then subsequent dehydrogenation to form farnesyl epoxy-quinone, the first and simplest SEC. The cytochrome P450 monooxygenase AOL_s00215g278 and the FAD-dependent monooxygenase AOL_s00215g279 might be involved in the oxygenation of the phenol moiety, most likely in the epoxy formation. The cytochrome P450 monooxygenases AOL_s00215g274 and AOL_s00215g280 are involved in specific regional ketone reductions at respectively C-4 and C-1 of farnesyl epoxy-quinone PubMed:33823587. The protein is Cytochrome P450 monooxygenase AOL_s00215g278 of Arthrobotrys oligospora (strain ATCC 24927 / CBS 115.81 / DSM 1491) (Nematode-trapping fungus).